Here is a 964-residue protein sequence, read N- to C-terminus: Syndetin (964 aa).

The residue at position 1 (methionine 1) is an N-acetylmethionine. A disordered region spans residues methionine 1–alanine 25. Serine 15 is modified (phosphoserine). Coiled coils occupy residues leucine 81–leucine 107 and tyrosine 216–isoleucine 244. Residues serine 494, serine 498, serine 559, and serine 561 each carry the phosphoserine modification. The disordered stretch occupies residues aspartate 532–valine 563. A Glycyl lysine isopeptide (Lys-Gly) (interchain with G-Cter in SUMO1); alternate cross-link involves residue lysine 963. Lysine 963 participates in a covalent cross-link: Glycyl lysine isopeptide (Lys-Gly) (interchain with G-Cter in SUMO2); alternate.

Belongs to the syndetin family. Component of the endosome-associated retrograde protein (EARP) complex, composed of VPS51, VPS52, VPS53 and VPS50/Syndetin. The EARP complex interacts with EIPR1. Interacts with VPS51 and VPS53 in an EIPR1-independent manner. As to expression, expressed in the brain (at protein level).

Its subcellular location is the recycling endosome. It localises to the membrane. Acts as a component of the EARP complex that is involved in endocytic recycling. The EARP complex associates with Rab4-positive endosomes and promotes recycling of internalized transferrin receptor (TFRC) to the plasma membrane. Within the EARP complex, required to tether the complex to recycling endosomes. Not involved in retrograde transport from early and late endosomes to the trans-Golgi network (TGN). This Rattus norvegicus (Rat) protein is Syndetin.